The following is a 647-amino-acid chain: DNA mismatch repair protein MutL (647 aa).

A disordered region spans residues 389–423; it reads SESSVSSVANKQQPTVKQAKRSADDSDSEHGKLDY. The span at 409 to 423 shows a compositional bias: basic and acidic residues; sequence RSADDSDSEHGKLDY.

Belongs to the DNA mismatch repair MutL/HexB family.

This protein is involved in the repair of mismatches in DNA. It is required for dam-dependent methyl-directed DNA mismatch repair. May act as a 'molecular matchmaker', a protein that promotes the formation of a stable complex between two or more DNA-binding proteins in an ATP-dependent manner without itself being part of a final effector complex. In Streptococcus thermophilus (strain ATCC BAA-491 / LMD-9), this protein is DNA mismatch repair protein MutL.